Here is a 276-residue protein sequence, read N- to C-terminus: Bifunctional protein FolD (276 aa).

NADP(+) contacts are provided by residues 158-160 (NRS), Ser-183, and Ile-224.

This sequence belongs to the tetrahydrofolate dehydrogenase/cyclohydrolase family. In terms of assembly, homodimer.

The catalysed reaction is (6R)-5,10-methylene-5,6,7,8-tetrahydrofolate + NADP(+) = (6R)-5,10-methenyltetrahydrofolate + NADPH. The enzyme catalyses (6R)-5,10-methenyltetrahydrofolate + H2O = (6R)-10-formyltetrahydrofolate + H(+). Its pathway is one-carbon metabolism; tetrahydrofolate interconversion. In terms of biological role, catalyzes the oxidation of 5,10-methylenetetrahydrofolate to 5,10-methenyltetrahydrofolate and then the hydrolysis of 5,10-methenyltetrahydrofolate to 10-formyltetrahydrofolate. The sequence is that of Bifunctional protein FolD from Picrophilus torridus (strain ATCC 700027 / DSM 9790 / JCM 10055 / NBRC 100828 / KAW 2/3).